The chain runs to 353 residues: Photosystem II protein D1 (353 aa).

N-acetylthreonine is present on Thr-2. Thr-2 is subject to Phosphothreonine. Transmembrane regions (helical) follow at residues 29 to 46, 118 to 133, and 142 to 156; these read YIGW…TATS, HFLL…EWEL, and WIAV…AATA. His-118 contacts chlorophyll a. Tyr-126 contributes to the pheophytin a binding site. [CaMn4O5] cluster contacts are provided by Asp-170 and Glu-189. A helical transmembrane segment spans residues 197–218; sequence FHMLGVAGVFGGSLFSAMHGSL. His-198 contributes to the chlorophyll a binding site. A quinone is bound by residues His-215 and 264–265; that span reads SF. His-215 provides a ligand contact to Fe cation. His-272 is a Fe cation binding site. The chain crosses the membrane as a helical span at residues 274-288; the sequence is FLAAWPVVGIWFTAL. [CaMn4O5] cluster-binding residues include His-332, Glu-333, Asp-342, and Ala-344. Residues 345-353 constitute a propeptide that is removed on maturation; it reads VVEAPSTNG.

This sequence belongs to the reaction center PufL/M/PsbA/D family. PSII is composed of 1 copy each of membrane proteins PsbA, PsbB, PsbC, PsbD, PsbE, PsbF, PsbH, PsbI, PsbJ, PsbK, PsbL, PsbM, PsbT, PsbX, PsbY, PsbZ, Psb30/Ycf12, at least 3 peripheral proteins of the oxygen-evolving complex and a large number of cofactors. It forms dimeric complexes. The D1/D2 heterodimer binds P680, chlorophylls that are the primary electron donor of PSII, and subsequent electron acceptors. It shares a non-heme iron and each subunit binds pheophytin, quinone, additional chlorophylls, carotenoids and lipids. D1 provides most of the ligands for the Mn4-Ca-O5 cluster of the oxygen-evolving complex (OEC). There is also a Cl(-1) ion associated with D1 and D2, which is required for oxygen evolution. The PSII complex binds additional chlorophylls, carotenoids and specific lipids. serves as cofactor. Tyr-161 forms a radical intermediate that is referred to as redox-active TyrZ, YZ or Y-Z. Post-translationally, C-terminally processed by CTPA; processing is essential to allow assembly of the oxygen-evolving complex and thus photosynthetic growth.

It is found in the plastid. Its subcellular location is the chloroplast thylakoid membrane. The enzyme catalyses 2 a plastoquinone + 4 hnu + 2 H2O = 2 a plastoquinol + O2. Its function is as follows. Photosystem II (PSII) is a light-driven water:plastoquinone oxidoreductase that uses light energy to abstract electrons from H(2)O, generating O(2) and a proton gradient subsequently used for ATP formation. It consists of a core antenna complex that captures photons, and an electron transfer chain that converts photonic excitation into a charge separation. The D1/D2 (PsbA/PsbD) reaction center heterodimer binds P680, the primary electron donor of PSII as well as several subsequent electron acceptors. The sequence is that of Photosystem II protein D1 from Aethionema grandiflorum (Persian stone-cress).